A 505-amino-acid polypeptide reads, in one-letter code: Maturase K (505 aa).

This sequence belongs to the intron maturase 2 family. MatK subfamily.

The protein localises to the plastid. It is found in the chloroplast. Its function is as follows. Usually encoded in the trnK tRNA gene intron. Probably assists in splicing its own and other chloroplast group II introns. The chain is Maturase K from Froelichia floridana (Florida snake-cotton).